Here is a 444-residue protein sequence, read N- to C-terminus: Type VII secretion system protein EssB (444 aa).

At M1–W229 the chain is on the cytoplasmic side. A helical membrane pass occupies residues V230–F250. Over S251 to K444 the chain is Extracellular. A disordered region spans residues K366–K444. Residues S372 to K444 are compositionally biased toward basic and acidic residues. A coiled-coil region spans residues L387–K443.

Belongs to the EssB family.

The protein resides in the cell membrane. Functionally, component of the type VII secretion system (Ess). Required for the secretion of EsxA. The chain is Type VII secretion system protein EssB from Staphylococcus aureus (strain MRSA252).